The following is a 481-amino-acid chain: Small ribosomal subunit protein bS1 (481 aa).

S1 motif domains lie at 36–105 (GDIV…LSKK), 123–188 (DEAV…LSRR), 209–277 (GAIR…LSLK), and 294–363 (GQIV…LSLK). Residues 437-465 (ATEEAGHGSSEQPPASSTPSAKATGGSLA) form a disordered region. Residues 445–457 (SSEQPPASSTPSA) are compositionally biased toward polar residues.

Belongs to the bacterial ribosomal protein bS1 family.

Its function is as follows. Binds mRNA; thus facilitating recognition of the initiation point. It is needed to translate mRNA with a short Shine-Dalgarno (SD) purine-rich sequence. The chain is Small ribosomal subunit protein bS1 (rpsA) from Mycobacterium leprae (strain TN).